The following is a 781-amino-acid chain: Probable aminopeptidase 2 (781 aa).

Substrate-binding positions include Glu-105 and 237–241; that span reads GAMEN. Residue His-272 participates in Zn(2+) binding. Glu-273 serves as the catalytic Proton acceptor. 2 residues coordinate Zn(2+): His-276 and Glu-295.

It belongs to the peptidase M1 family. Zn(2+) is required as a cofactor.

The protein resides in the cytoplasm. The chain is Probable aminopeptidase 2 (ape2) from Sulfurisphaera tokodaii (strain DSM 16993 / JCM 10545 / NBRC 100140 / 7) (Sulfolobus tokodaii).